We begin with the raw amino-acid sequence, 230 residues long: 5'-methylthioadenosine/S-adenosylhomocysteine nucleosidase (230 aa).

Residue Glu12 is the Proton acceptor of the active site. Residues Gly78, Met153, and 174–175 (ME) contribute to the substrate site. Asp198 serves as the catalytic Proton donor.

The protein belongs to the PNP/UDP phosphorylase family. MtnN subfamily.

The enzyme catalyses S-adenosyl-L-homocysteine + H2O = S-(5-deoxy-D-ribos-5-yl)-L-homocysteine + adenine. The catalysed reaction is S-methyl-5'-thioadenosine + H2O = 5-(methylsulfanyl)-D-ribose + adenine. It carries out the reaction 5'-deoxyadenosine + H2O = 5-deoxy-D-ribose + adenine. It functions in the pathway amino-acid biosynthesis; L-methionine biosynthesis via salvage pathway; S-methyl-5-thio-alpha-D-ribose 1-phosphate from S-methyl-5'-thioadenosine (hydrolase route): step 1/2. Its function is as follows. Catalyzes the irreversible cleavage of the glycosidic bond in both 5'-methylthioadenosine (MTA) and S-adenosylhomocysteine (SAH/AdoHcy) to adenine and the corresponding thioribose, 5'-methylthioribose and S-ribosylhomocysteine, respectively. Also cleaves 5'-deoxyadenosine, a toxic by-product of radical S-adenosylmethionine (SAM) enzymes, into 5-deoxyribose and adenine. The chain is 5'-methylthioadenosine/S-adenosylhomocysteine nucleosidase from Tolumonas auensis (strain DSM 9187 / NBRC 110442 / TA 4).